A 139-amino-acid chain; its full sequence is Small ribosomal subunit protein uS12 (139 aa).

The disordered stretch occupies residues 1-44; sequence MPTINQLVKKPRTSKVKKSTAPALNKGYNSHKKKATDLASPQKR. Residues 9–18 are compositionally biased toward basic residues; it reads KKPRTSKVKK. D102 carries the post-translational modification 3-methylthioaspartic acid.

The protein belongs to the universal ribosomal protein uS12 family. In terms of assembly, part of the 30S ribosomal subunit. Contacts proteins S8 and S17. May interact with IF1 in the 30S initiation complex.

Its function is as follows. With S4 and S5 plays an important role in translational accuracy. Interacts with and stabilizes bases of the 16S rRNA that are involved in tRNA selection in the A site and with the mRNA backbone. Located at the interface of the 30S and 50S subunits, it traverses the body of the 30S subunit contacting proteins on the other side and probably holding the rRNA structure together. The combined cluster of proteins S8, S12 and S17 appears to hold together the shoulder and platform of the 30S subunit. The protein is Small ribosomal subunit protein uS12 of Macrococcus caseolyticus (strain JCSC5402) (Macrococcoides caseolyticum).